The sequence spans 210 residues: MKNVDDLIASAAELADRGLSKGEIADELNVSRETASWLVERSGAATEPEPRAEPEGPDDIHVDWNAIGSGGKRLTYVGRALADLLMETNGEADVTVGIEKAGVPLATSVSRELETTLGAYSPAKHQWDEGDLEDLGGGFSRNFSPVEGRDCFIVDDTVTSGTTLRETIDAIRSEGGEPLACVVIVDKQGVEEIDGVPVHSLINVVRVGEQ.

Residues 39–60 (VERSGAATEPEPRAEPEGPDDI) are disordered. Positions 48–60 (PEPRAEPEGPDDI) are enriched in basic and acidic residues.

This sequence belongs to the purine/pyrimidine phosphoribosyltransferase family. GfcR subfamily.

Its activity is regulated as follows. Interaction with effectors modulates GfcR activity. 2-keto-3-deoxy-6-phosphogluconate (KDPG), fructose-1,6-bisphosphate (FBP), 2-keto-3-deoxy-6-phosphogalactonate (KDPGal) and glycerol-3-phosphate (G3P), which are intermediates of sugar and glycerol degradation pathways, can act as inducer molecules. DNA-binding transcriptional regulator that functions as a regulator of central sugar catabolic pathways. Is both a local regulator of specific steps in the pathways for D-glucose and D-fructose degradation and a global regulator of hexose catabolism. In the presence of D-glucose, activates expression of the gene encoding the gluconate dehydratase (gad), which is involved in D-glucose catabolism via the semiphosphorylative Entner-Doudoroff (spED) pathway. In the presence of D-fructose, activates expression of the genes encoding the PTS system EIIC component (ptfC) and the fructose-1,6-bisphosphate aldolase (fba), which are involved in D-fructose uptake and degradation via the modified Embden-Meyerhof pathway. In addition, in the presence of D-glucose, D-fructose, D-galactose or glycerol, it activates expression of the genes encoding glyceraldehyde-3-phosphate dehydrogenase (gap) and pyruvate kinase (pykA), enzymes common to all four degradation pathways. Acts by binding directly to the promoter region of the regulated genes. In Haloferax volcanii (strain ATCC 29605 / DSM 3757 / JCM 8879 / NBRC 14742 / NCIMB 2012 / VKM B-1768 / DS2) (Halobacterium volcanii), this protein is Transcriptional regulator GfcR.